The primary structure comprises 555 residues: CTP synthase (555 aa).

Residues 1-270 form an amidoligase domain region; it reads MTKFVFVTGG…DGLICDKLRL (270 aa). Ser13 lines the CTP pocket. Ser13 contacts UTP. Residues 14–19 and Asp71 contribute to the ATP site; that span reads SLGKGI. 2 residues coordinate Mg(2+): Asp71 and Glu144. CTP-binding positions include 151-153, 191-196, and Lys227; these read DIE and KTKPTQ. Residues 191–196 and Lys227 each bind UTP; that span reads KTKPTQ. Residues 295–547 form the Glutamine amidotransferase type-1 domain; it reads NIVMVGKYVE…IKAALDHQAA (253 aa). An L-glutamine-binding site is contributed by Gly356. The active-site Nucleophile; for glutamine hydrolysis is the Cys383. L-glutamine-binding positions include 384–387, Glu407, and Arg473; that span reads LGMQ. Catalysis depends on residues His520 and Glu522.

The protein belongs to the CTP synthase family. As to quaternary structure, homotetramer.

The enzyme catalyses UTP + L-glutamine + ATP + H2O = CTP + L-glutamate + ADP + phosphate + 2 H(+). It carries out the reaction L-glutamine + H2O = L-glutamate + NH4(+). The catalysed reaction is UTP + NH4(+) + ATP = CTP + ADP + phosphate + 2 H(+). It functions in the pathway pyrimidine metabolism; CTP biosynthesis via de novo pathway; CTP from UDP: step 2/2. Its activity is regulated as follows. Allosterically activated by GTP, when glutamine is the substrate; GTP has no effect on the reaction when ammonia is the substrate. The allosteric effector GTP functions by stabilizing the protein conformation that binds the tetrahedral intermediate(s) formed during glutamine hydrolysis. Inhibited by the product CTP, via allosteric rather than competitive inhibition. Its function is as follows. Catalyzes the ATP-dependent amination of UTP to CTP with either L-glutamine or ammonia as the source of nitrogen. Regulates intracellular CTP levels through interactions with the four ribonucleotide triphosphates. This is CTP synthase from Albidiferax ferrireducens (strain ATCC BAA-621 / DSM 15236 / T118) (Rhodoferax ferrireducens).